Here is a 60-residue protein sequence, read N- to C-terminus: Large ribosomal subunit protein uL30 (60 aa).

It belongs to the universal ribosomal protein uL30 family. In terms of assembly, part of the 50S ribosomal subunit.

The chain is Large ribosomal subunit protein uL30 from Dehalococcoides mccartyi (strain CBDB1).